Here is a 444-residue protein sequence, read N- to C-terminus: Jacalin-related lectin 11 (444 aa).

An N-acetylalanine modification is found at A2. 3 Jacalin-type lectin domains span residues A2–K143, S146–P290, and P298–A442.

The protein belongs to the jacalin lectin family.

The sequence is that of Jacalin-related lectin 11 (JAL11) from Arabidopsis thaliana (Mouse-ear cress).